A 163-amino-acid chain; its full sequence is Nucleotide-binding protein YajQ (163 aa).

This sequence belongs to the YajQ family.

Functionally, nucleotide-binding protein. This chain is Nucleotide-binding protein YajQ, found in Shigella flexneri.